The primary structure comprises 157 residues: Large ribosomal subunit protein eL24 (157 aa).

Positions 94–157 (RNQKPEVRKA…ISAPRVGGKR (64 aa)) are disordered. Basic and acidic residues predominate over residues 96–117 (QKPEVRKAQREQAIRAAKEAKK). Positions 123 to 140 (KKPAAPSAKASTKTAQKP) are enriched in low complexity.

This sequence belongs to the eukaryotic ribosomal protein eL24 family. In terms of assembly, component of the large ribosomal subunit.

The protein localises to the cytoplasm. Its function is as follows. Component of the large ribosomal subunit. The ribosome is a large ribonucleoprotein complex responsible for the synthesis of proteins in the cell. The polypeptide is Large ribosomal subunit protein eL24 (rpl24) (Pagrus major (Red sea bream)).